Reading from the N-terminus, the 314-residue chain is Vomeronasal type-1 receptor 95 (314 aa).

The Extracellular segment spans residues 1–18; it reads MNKDNTLYCSAYRIAFFS. Residues 19-39 form a helical membrane-spanning segment; the sequence is EIGIGISANSCLLLFHTFMFI. Residues 40–48 lie on the Cytoplasmic side of the membrane; sequence RGHRPRLTD. The helical transmembrane segment at 49-69 threads the bilayer; the sequence is LPIGLVALIHLVMLLLAAYIT. Topologically, residues 70 to 88 are extracellular; sequence EDFFMSSGGWDDITCKLFI. The cysteines at positions 84 and 171 are disulfide-linked. The chain crosses the membrane as a helical span at residues 89 to 113; the sequence is FLHRFFRSLSVCDTCMLSVFQAIIL. The Cytoplasmic portion of the chain corresponds to 114-133; the sequence is CPQSSHLAKFKLNSPHHLSC. The helical transmembrane segment at 134–154 threads the bilayer; that stretch reads FFIFMSIFYTSISSHILIAAI. The Extracellular segment spans residues 155–186; the sequence is ATQNLTSVNLIYITKSCSFLPMSSSMQRTFST. The N-linked (GlcNAc...) asparagine glycan is linked to asparagine 158. A helical transmembrane segment spans residues 187–207; it reads LLAFRNVFLIGLMGLSTCYMA. At 208–235 the chain is on the cytoplasmic side; the sequence is TLLCRHKTRSQQLQNSKLSPKATPEQRA. A helical transmembrane segment spans residues 236–256; that stretch reads IWTILMLMSFFLIISTFDSIM. The Extracellular portion of the chain corresponds to 257 to 268; it reads TYSRTIFQGNQS. An N-linked (GlcNAc...) asparagine glycan is attached at asparagine 266. A helical transmembrane segment spans residues 269–289; that stretch reads LYCVQIPVAHGYAAFSPLLVL. Topologically, residues 290-314 are cytoplasmic; that stretch reads NNEKRLTSLMISMYDRIVRLESLCS.

This sequence belongs to the G-protein coupled receptor 1 family.

Its subcellular location is the cell membrane. Functionally, putative pheromone receptor implicated in the regulation of social as well as reproductive behavior. This chain is Vomeronasal type-1 receptor 95 (Vom1r95), found in Rattus norvegicus (Rat).